Consider the following 688-residue polypeptide: PR domain zinc finger protein 8 (688 aa).

The SET domain occupies Lys-16–Gly-131. Residue Tyr-130 participates in S-adenosyl-L-methionine binding. Residues Tyr-154–His-182 form a C2H2-type 1 zinc finger. Disordered stretches follow at residues Thr-184 to Gly-309 and Glu-397 to Ser-506. Positions Gln-192–Lys-208 are enriched in gly residues. Low complexity-rich tracts occupy residues Glu-209–Gln-219 and Gly-275–Gly-284. 2 stretches are compositionally biased toward gly residues: residues Ala-414–Asn-424 and Leu-470–Gln-489. 2 C2H2-type zinc fingers span residues Asn-624–His-647 and Leu-665–His-687.

It belongs to the class V-like SAM-binding methyltransferase superfamily. As to quaternary structure, interacts with BHLHE22. Interacts with EPM2A and NHLRC1. This interaction sequesters EPM2A and NHLRC1 to the nucleus. As to expression, expressed in brain, heart, liver, testes, retina. Highest expression is observed in the retina and hippocampus; moderately expressed in the cortex and cerebellum. In the retina, it is expressed in bipolar and amacrine cells.

Its subcellular location is the nucleus. Functionally, probable histone methyltransferase, preferentially acting on 'Lys-9' of histone H3. Histone methyltransferase activity has not been confirmed in other species. Involved in the control of steroidogenesis through transcriptional repression of steroidogenesis marker genes such as CYP17A1 and LHCGR. Forms with BHLHE22 a transcriptional repressor complex controlling genes involved in neural development and neuronal differentiation. In the retina, it is required for rod bipolar and type 2 OFF-cone bipolar cell survival. The chain is PR domain zinc finger protein 8 (Prdm8) from Mus musculus (Mouse).